The chain runs to 293 residues: tRNA pseudouridine synthase B (293 aa).

The active-site Nucleophile is the Asp-38.

It belongs to the pseudouridine synthase TruB family. Type 1 subfamily.

The enzyme catalyses uridine(55) in tRNA = pseudouridine(55) in tRNA. Responsible for synthesis of pseudouridine from uracil-55 in the psi GC loop of transfer RNAs. The polypeptide is tRNA pseudouridine synthase B (Solibacter usitatus (strain Ellin6076)).